Reading from the N-terminus, the 465-residue chain is GTPase Der (465 aa).

2 EngA-type G domains span residues 3-167 and 179-352; these read PLVA…PERS and IHIA…VSAL. Residues 9-16, 57-61, 119-122, 185-192, 232-236, and 297-300 each bind GTP; these read GRPNVGKS, DTGGM, NKID, DTAGL, and NKWD. One can recognise a KH-like domain in the interval 353–437; it reads RQFSTSEVNK…PVRFLFREGD (85 aa).

It belongs to the TRAFAC class TrmE-Era-EngA-EngB-Septin-like GTPase superfamily. EngA (Der) GTPase family. In terms of assembly, associates with the 50S ribosomal subunit.

Its function is as follows. GTPase that plays an essential role in the late steps of ribosome biogenesis. The chain is GTPase Der from Xylella fastidiosa (strain M12).